A 135-amino-acid chain; its full sequence is Class I hydrophobin dewB (135 aa).

An N-terminal signal peptide occupies residues M1–A17. Disulfide bonds link C35–C109, C43–C103, C44–C84, and C110–C128.

The protein belongs to the fungal hydrophobin family. Self-assembles to form functional amyloid fibrils called rodlets. Self-assembly into fibrillar rodlets occurs spontaneously at hydrophobic:hydrophilic interfaces and the rodlets further associate laterally to form amphipathic monolayers.

The protein localises to the secreted. It is found in the spore wall. Its function is as follows. Aerial growth, conidiation, and dispersal of filamentous fungi in the environment rely upon a capability of their secreting small amphipathic proteins called hydrophobins (HPBs) with low sequence identity. Class I can self-assemble into an outermost layer of rodlet bundles on aerial cell surfaces, conferring cellular hydrophobicity that supports fungal growth, development and dispersal; whereas Class II form highly ordered films at water-air interfaces through intermolecular interactions but contribute nothing to the rodlet structure. DewB is a class I hydrophobin that contributes to the hydrophobicity of the spore surface. This is Class I hydrophobin dewB from Emericella nidulans (strain FGSC A4 / ATCC 38163 / CBS 112.46 / NRRL 194 / M139) (Aspergillus nidulans).